Here is a 305-residue protein sequence, read N- to C-terminus: MATKNEEILRKPDWLKIKLNTNENYTGLKKMMREKNLNTVCEEAKCPNIHECWGARRTATFMILGAVCTRACRFCAVKTGLPNELDLNEPERVAESVELMNLKHVVITAVARDDLRDAGSNVYAETVRKVRERNPFTTIEILPSDMGGDYDALETLMASRPDILNHNIETVRRLTPRVRARATYDRTLEFLRRSKELQPDIPTKSSIMVGLGETIEEIYETMDDLRANDVDILTIGQYLQPSRKHLKVQKYYTPLEFGKLRKVAMDKGFKHCQAGPLVRSSYHADEQVNEAAKEKQRQGEAQLNS.

[4Fe-4S] cluster is bound by residues cysteine 41, cysteine 46, cysteine 52, cysteine 68, cysteine 72, cysteine 75, and serine 281. The 217-residue stretch at 54–270 (GARRTATFMI…RKVAMDKGFK (217 aa)) folds into the Radical SAM core domain. Residues 283-298 (HADEQVNEAAKEKQRQ) show a composition bias toward basic and acidic residues. Residues 283-305 (HADEQVNEAAKEKQRQGEAQLNS) form a disordered region.

This sequence belongs to the radical SAM superfamily. Lipoyl synthase family. [4Fe-4S] cluster serves as cofactor.

It is found in the cytoplasm. It carries out the reaction [[Fe-S] cluster scaffold protein carrying a second [4Fe-4S](2+) cluster] + N(6)-octanoyl-L-lysyl-[protein] + 2 oxidized [2Fe-2S]-[ferredoxin] + 2 S-adenosyl-L-methionine + 4 H(+) = [[Fe-S] cluster scaffold protein] + N(6)-[(R)-dihydrolipoyl]-L-lysyl-[protein] + 4 Fe(3+) + 2 hydrogen sulfide + 2 5'-deoxyadenosine + 2 L-methionine + 2 reduced [2Fe-2S]-[ferredoxin]. It functions in the pathway protein modification; protein lipoylation via endogenous pathway; protein N(6)-(lipoyl)lysine from octanoyl-[acyl-carrier-protein]. Functionally, catalyzes the radical-mediated insertion of two sulfur atoms into the C-6 and C-8 positions of the octanoyl moiety bound to the lipoyl domains of lipoate-dependent enzymes, thereby converting the octanoylated domains into lipoylated derivatives. The chain is Lipoyl synthase from Staphylococcus aureus (strain Mu3 / ATCC 700698).